A 525-amino-acid polypeptide reads, in one-letter code: uncharacterized protein (525 aa).

The next 2 helical transmembrane spans lie at 28–48 (FIDV…NLII) and 353–373 (GVNA…LFTP). Residues 146 to 394 (DIKIGKLKVG…ELKIASKMMF (249 aa)) enclose the Pterin-binding domain.

The protein resides in the cell membrane. Functionally, unknown. Does not possess dihydropteroate synthase (DHPS) activity since it does not catalyze the condensation of 6-hydroxymethyl-7,8-dihydropterin pyrophosphate (DHPP) and 4-aminobenzoate to form 7,8-dihydropteroate. This is an uncharacterized protein from Methanocaldococcus jannaschii (strain ATCC 43067 / DSM 2661 / JAL-1 / JCM 10045 / NBRC 100440) (Methanococcus jannaschii).